The primary structure comprises 437 residues: RING finger protein 150 (437 aa).

An N-terminal signal peptide occupies residues 1 to 34 (MTMSLIQACRSLALSTWLLSFCFVHLLCLDFTVA). Over 35–207 (EKEEWYTAFV…NLQKYVSRTS (173 aa)) the chain is Extracellular. 4 N-linked (GlcNAc...) asparagine glycosylation sites follow: N45, N124, N152, and N185. One can recognise a PA domain in the interval 80–182 (SPKQDARGEV…PKGKEIVSLL (103 aa)). Residues 208–228 (VVFVSISFIVLMIISLAWLVF) traverse the membrane as a helical segment. The Cytoplasmic portion of the chain corresponds to 229-437 (YYIQRFRYAN…TDQDCEEVKS (209 aa)). The segment at 277-318 (CAVCIEGYKPNDVVRILPCRHLFHKSCVDPWLLDHRTCPMCK) adopts an RING-type; atypical zinc-finger fold.

Its subcellular location is the membrane. The sequence is that of RING finger protein 150 (Rnf150) from Mus musculus (Mouse).